Consider the following 195-residue polypeptide: Small ribosomal subunit protein eS7 (195 aa).

2 positions are modified to phosphothreonine: T146 and T151. A phosphoserine mark is found at S172 and S173.

This sequence belongs to the eukaryotic ribosomal protein eS7 family. In terms of assembly, component of the small ribosomal subunit (SSU). Mature yeast ribosomes consist of a small (40S) and a large (60S) subunit. The 40S small subunit contains 1 molecule of ribosomal RNA (18S rRNA) and at least 33 different proteins. The large 60S subunit contains 3 rRNA molecules (25S, 5.8S and 5S rRNA) and at least 46 different proteins. Interacts with snoRNA U3. uS11 interacts with MPP10. Component of the ribosomal small subunit (SSU) processome composed of at least 40 protein subunits and snoRNA U3.

The protein resides in the cytoplasm. It is found in the nucleus. The protein localises to the nucleolus. Component of the ribosome, a large ribonucleoprotein complex responsible for the synthesis of proteins in the cell. The small ribosomal subunit (SSU) binds messenger RNAs (mRNAs) and translates the encoded message by selecting cognate aminoacyl-transfer RNA (tRNA) molecules. The large subunit (LSU) contains the ribosomal catalytic site termed the peptidyl transferase center (PTC), which catalyzes the formation of peptide bonds, thereby polymerizing the amino acids delivered by tRNAs into a polypeptide chain. The nascent polypeptides leave the ribosome through a tunnel in the LSU and interact with protein factors that function in enzymatic processing, targeting, and the membrane insertion of nascent chains at the exit of the ribosomal tunnel. eS7 is involved in nucleolar processing of pre-18S ribosomal RNA and ribosome assembly. The protein is Small ribosomal subunit protein eS7 (rps7) of Schizosaccharomyces pombe (strain 972 / ATCC 24843) (Fission yeast).